Consider the following 294-residue polypeptide: Beta-glucoside kinase (294 aa).

5–11 (AFDIGGT) serves as a coordination point for ATP.

Belongs to the ROK (NagC/XylR) family.

The catalysed reaction is D-cellobiose + ATP = 6-phospho-beta-D-glucosyl-(1-&gt;4)-D-glucose + ADP + H(+). Functionally, catalyzes the ATP-dependent phosphorylation of cellobiose to produce cellobiose-6'-P. May have a dual role of kinase and transcriptional regulator of the cellobiose-PTS operon. This Listeria monocytogenes serovar 1/2a (strain ATCC BAA-679 / EGD-e) protein is Beta-glucoside kinase (bglK).